A 335-amino-acid chain; its full sequence is Vitamin B12 import system permease protein BtuC (335 aa).

A run of 8 helical transmembrane segments spans residues 25–45 (LVVM…VWIW), 67–87 (MAVI…QALF), 94–113 (PGLL…AVLL), 117–139 (LLPI…SILL), 153–173 (LLVG…AVYF), 243–263 (VLAI…ISFI), 281–301 (RLLA…DVVA), and 309–329 (ELPI…WLLI).

The protein belongs to the binding-protein-dependent transport system permease family. FecCD subfamily. As to quaternary structure, the complex is composed of two ATP-binding proteins (BtuD), two transmembrane proteins (BtuC) and a solute-binding protein (BtuF).

The protein localises to the cell inner membrane. Its function is as follows. Part of the ABC transporter complex BtuCDF involved in vitamin B12 import. Involved in the translocation of the substrate across the membrane. The sequence is that of Vitamin B12 import system permease protein BtuC from Yersinia pseudotuberculosis serotype O:1b (strain IP 31758).